A 123-amino-acid chain; its full sequence is Anti-lipopolysaccharide factor (123 aa).

The N-terminal stretch at 1–26 is a signal peptide; the sequence is MRKGVVAGLCLALVVMCLYLPQPCEA. N-linked (GlcNAc...) asparagine glycosylation occurs at Asn-45. Cysteines 55 and 76 form a disulfide.

As to expression, isoform 1 is highly expressed in muscle and stomach, moderately in heart and gill and at lower levels in hemocytes and hepatopancreas. Isoform 2 is mainly expressed in gill, hepatopancreas, muscle and eyestalk.

The protein localises to the secreted. Its function is as follows. May bind to bacterial LPS and thus specifically inhibit the LPS-mediated activation of the hemolymph coagulation. It has a strong antibacterial effect especially on the growth of Gram-negative bacteria. The polypeptide is Anti-lipopolysaccharide factor (Portunus trituberculatus (Swimming crab)).